The chain runs to 62 residues: Large ribosomal subunit protein bL28 (62 aa).

It belongs to the bacterial ribosomal protein bL28 family.

In Parafrankia sp. (strain EAN1pec), this protein is Large ribosomal subunit protein bL28.